A 492-amino-acid polypeptide reads, in one-letter code: Glutamyl-tRNA(Gln) amidotransferase subunit A (492 aa).

Catalysis depends on charge relay system residues K78 and S158. The Acyl-ester intermediate role is filled by S182.

The protein belongs to the amidase family. GatA subfamily. As to quaternary structure, heterotrimer of A, B and C subunits.

It catalyses the reaction L-glutamyl-tRNA(Gln) + L-glutamine + ATP + H2O = L-glutaminyl-tRNA(Gln) + L-glutamate + ADP + phosphate + H(+). Functionally, allows the formation of correctly charged Gln-tRNA(Gln) through the transamidation of misacylated Glu-tRNA(Gln) in organisms which lack glutaminyl-tRNA synthetase. The reaction takes place in the presence of glutamine and ATP through an activated gamma-phospho-Glu-tRNA(Gln). The sequence is that of Glutamyl-tRNA(Gln) amidotransferase subunit A from Rhodopseudomonas palustris (strain BisA53).